A 422-amino-acid polypeptide reads, in one-letter code: Enolase (422 aa).

(2R)-2-phosphoglycerate is bound at residue glutamine 161. Glutamate 203 (proton donor) is an active-site residue. Mg(2+) contacts are provided by aspartate 240, glutamate 283, and aspartate 310. Lysine 335, arginine 364, serine 365, and lysine 386 together coordinate (2R)-2-phosphoglycerate. Catalysis depends on lysine 335, which acts as the Proton acceptor.

The protein belongs to the enolase family. Requires Mg(2+) as cofactor.

The protein resides in the cytoplasm. It localises to the secreted. It is found in the cell surface. It carries out the reaction (2R)-2-phosphoglycerate = phosphoenolpyruvate + H2O. It participates in carbohydrate degradation; glycolysis; pyruvate from D-glyceraldehyde 3-phosphate: step 4/5. In terms of biological role, catalyzes the reversible conversion of 2-phosphoglycerate (2-PG) into phosphoenolpyruvate (PEP). It is essential for the degradation of carbohydrates via glycolysis. The polypeptide is Enolase (Deinococcus geothermalis (strain DSM 11300 / CIP 105573 / AG-3a)).